Reading from the N-terminus, the 447-residue chain is Tubulin beta-1 chain (447 aa).

Residues glutamine 11, glutamate 69, serine 138, glycine 142, threonine 143, glycine 144, asparagine 204, and asparagine 226 each contribute to the GTP site. Glutamate 69 is a Mg(2+) binding site. Residues 427 to 447 (EATADEDAEFEEEQEAEVEEN) form a disordered region. Residues 429-447 (TADEDAEFEEEQEAEVEEN) are compositionally biased toward acidic residues.

The protein belongs to the tubulin family. In terms of assembly, dimer of alpha and beta chains. A typical microtubule is a hollow water-filled tube with an outer diameter of 25 nm and an inner diameter of 15 nM. Alpha-beta heterodimers associate head-to-tail to form protofilaments running lengthwise along the microtubule wall with the beta-tubulin subunit facing the microtubule plus end conferring a structural polarity. Microtubules usually have 13 protofilaments but different protofilament numbers can be found in some organisms and specialized cells. The cofactor is Mg(2+).

It is found in the cytoplasm. The protein resides in the cytoskeleton. In terms of biological role, tubulin is the major constituent of microtubules, a cylinder consisting of laterally associated linear protofilaments composed of alpha- and beta-tubulin heterodimers. Microtubules grow by the addition of GTP-tubulin dimers to the microtubule end, where a stabilizing cap forms. Below the cap, tubulin dimers are in GDP-bound state, owing to GTPase activity of alpha-tubulin. This chain is Tubulin beta-1 chain, found in Glossina morsitans morsitans (Savannah tsetse fly).